Consider the following 164-residue polypeptide: Peptidyl-prolyl cis-trans isomerase A-like 4A (164 aa).

The 157-residue stretch at 7 to 163 (FFDITVDGKP…KKITIADCGQ (157 aa)) folds into the PPIase cyclophilin-type domain.

This sequence belongs to the cyclophilin-type PPIase family. PPIase A subfamily. In terms of tissue distribution, highly expressed in brain, ovary and mammary gland. Moderately expressed in lung, salivary gland, kidney, skin, adipose tissue, intestine and spleen. Weakly expressed in skeletal muscle, liver and stomach. Expressed in pleiomorphic and undifferentiated liposarcomas, osteosarcomas and breast carcinomas.

The protein localises to the cytoplasm. It catalyses the reaction [protein]-peptidylproline (omega=180) = [protein]-peptidylproline (omega=0). Functionally, PPIases accelerate the folding of proteins. It catalyzes the cis-trans isomerization of proline imidic peptide bonds in oligopeptides. This is Peptidyl-prolyl cis-trans isomerase A-like 4A from Homo sapiens (Human).